Consider the following 468-residue polypeptide: Proline--tRNA ligase (468 aa).

This sequence belongs to the class-II aminoacyl-tRNA synthetase family. ProS type 3 subfamily. As to quaternary structure, homodimer.

Its subcellular location is the cytoplasm. It carries out the reaction tRNA(Pro) + L-proline + ATP = L-prolyl-tRNA(Pro) + AMP + diphosphate. In terms of biological role, catalyzes the attachment of proline to tRNA(Pro) in a two-step reaction: proline is first activated by ATP to form Pro-AMP and then transferred to the acceptor end of tRNA(Pro). The sequence is that of Proline--tRNA ligase from Frankia alni (strain DSM 45986 / CECT 9034 / ACN14a).